A 228-amino-acid polypeptide reads, in one-letter code: Phosphoribosylformylglycinamidine synthase subunit PurQ (228 aa).

A Glutamine amidotransferase type-1 domain is found at 2-225 (KAAVISFPGS…INQTEGADVR (224 aa)). Residue cysteine 86 is the Nucleophile of the active site. Residues histidine 194 and glutamate 196 contribute to the active site.

As to quaternary structure, part of the FGAM synthase complex composed of 1 PurL, 1 PurQ and 2 PurS subunits.

The protein localises to the cytoplasm. It carries out the reaction N(2)-formyl-N(1)-(5-phospho-beta-D-ribosyl)glycinamide + L-glutamine + ATP + H2O = 2-formamido-N(1)-(5-O-phospho-beta-D-ribosyl)acetamidine + L-glutamate + ADP + phosphate + H(+). It catalyses the reaction L-glutamine + H2O = L-glutamate + NH4(+). The protein operates within purine metabolism; IMP biosynthesis via de novo pathway; 5-amino-1-(5-phospho-D-ribosyl)imidazole from N(2)-formyl-N(1)-(5-phospho-D-ribosyl)glycinamide: step 1/2. Its function is as follows. Part of the phosphoribosylformylglycinamidine synthase complex involved in the purines biosynthetic pathway. Catalyzes the ATP-dependent conversion of formylglycinamide ribonucleotide (FGAR) and glutamine to yield formylglycinamidine ribonucleotide (FGAM) and glutamate. The FGAM synthase complex is composed of three subunits. PurQ produces an ammonia molecule by converting glutamine to glutamate. PurL transfers the ammonia molecule to FGAR to form FGAM in an ATP-dependent manner. PurS interacts with PurQ and PurL and is thought to assist in the transfer of the ammonia molecule from PurQ to PurL. This chain is Phosphoribosylformylglycinamidine synthase subunit PurQ, found in Lacticaseibacillus paracasei (strain ATCC 334 / BCRC 17002 / CCUG 31169 / CIP 107868 / KCTC 3260 / NRRL B-441) (Lactobacillus paracasei).